The sequence spans 183 residues: Ribosome rescue factor SmrB (183 aa).

Residues 98 to 173 (LDLHGLTQMQ…GDAALLVLIE (76 aa)) form the Smr domain.

This sequence belongs to the SmrB family. In terms of assembly, associates with collided ribosomes, but not with correctly translating polysomes.

In terms of biological role, acts as a ribosome collision sensor. Detects stalled/collided disomes (pairs of ribosomes where the leading ribosome is stalled and a second ribosome has collided with it) and endonucleolytically cleaves mRNA at the 5' boundary of the stalled ribosome. Stalled/collided disomes form a new interface (primarily via the 30S subunits) that binds SmrB. Cleaved mRNA becomes available for tmRNA ligation, leading to ribosomal subunit dissociation and rescue of stalled ribosomes. This Enterobacter sp. (strain 638) protein is Ribosome rescue factor SmrB.